The primary structure comprises 86 residues: Large ribosomal subunit protein uL23 (86 aa).

It belongs to the universal ribosomal protein uL23 family. In terms of assembly, part of the 50S ribosomal subunit. Contacts protein L29.

Binds to 23S rRNA. One of the proteins that surrounds the polypeptide exit tunnel on the outside of the ribosome. The protein is Large ribosomal subunit protein uL23 of Methanococcus aeolicus (strain ATCC BAA-1280 / DSM 17508 / OCM 812 / Nankai-3).